The primary structure comprises 109 residues: Cell division protein ZapA (109 aa).

Positions 21–99 (PEQQEALNQA…IEQALLEQGK (79 aa)) form a coiled coil.

This sequence belongs to the ZapA family. Type 1 subfamily. Homodimer. Interacts with FtsZ.

It localises to the cytoplasm. Its function is as follows. Activator of cell division through the inhibition of FtsZ GTPase activity, therefore promoting FtsZ assembly into bundles of protofilaments necessary for the formation of the division Z ring. It is recruited early at mid-cell but it is not essential for cell division. The polypeptide is Cell division protein ZapA (Pectobacterium atrosepticum (strain SCRI 1043 / ATCC BAA-672) (Erwinia carotovora subsp. atroseptica)).